Reading from the N-terminus, the 309-residue chain is tRNA uridine(34) hydroxylase (309 aa).

The region spanning 129 to 223 is the Rhodanese domain; sequence SEPGTIVIDT…YLEEVPAEQS (95 aa). The active-site Cysteine persulfide intermediate is the C183. Residues 288–309 are disordered; sequence YAERQRQVELAQARGKRPHIGS.

Belongs to the TrhO family.

The catalysed reaction is uridine(34) in tRNA + AH2 + O2 = 5-hydroxyuridine(34) in tRNA + A + H2O. Catalyzes oxygen-dependent 5-hydroxyuridine (ho5U) modification at position 34 in tRNAs. This chain is tRNA uridine(34) hydroxylase, found in Mesorhizobium japonicum (strain LMG 29417 / CECT 9101 / MAFF 303099) (Mesorhizobium loti (strain MAFF 303099)).